The following is a 149-amino-acid chain: UPF0208 membrane protein VFMJ11_0876 (149 aa).

2 consecutive transmembrane segments (helical) span residues 41 to 61 (FAVKVMPAVAVISVLTQMVFN) and 69 to 89 (AIIIALFAISMPLQGFWWLGN).

Belongs to the UPF0208 family.

It is found in the cell inner membrane. In Aliivibrio fischeri (strain MJ11) (Vibrio fischeri), this protein is UPF0208 membrane protein VFMJ11_0876.